The chain runs to 320 residues: 4-diphosphocytidyl-2-C-methyl-D-erythritol kinase (320 aa).

Lysine 20 is an active-site residue. 112-122 (PVAGGMGGGSA) contributes to the ATP binding site. The active site involves aspartate 154.

The protein belongs to the GHMP kinase family. IspE subfamily.

The enzyme catalyses 4-CDP-2-C-methyl-D-erythritol + ATP = 4-CDP-2-C-methyl-D-erythritol 2-phosphate + ADP + H(+). It participates in isoprenoid biosynthesis; isopentenyl diphosphate biosynthesis via DXP pathway; isopentenyl diphosphate from 1-deoxy-D-xylulose 5-phosphate: step 3/6. In terms of biological role, catalyzes the phosphorylation of the position 2 hydroxy group of 4-diphosphocytidyl-2C-methyl-D-erythritol. This Arthrobacter sp. (strain FB24) protein is 4-diphosphocytidyl-2-C-methyl-D-erythritol kinase.